A 136-amino-acid chain; its full sequence is Aspartate 1-decarboxylase (136 aa).

Ser-25 acts as the Schiff-base intermediate with substrate; via pyruvic acid in catalysis. Ser-25 is subject to Pyruvic acid (Ser). Thr-57 serves as a coordination point for substrate. Tyr-58 serves as the catalytic Proton donor. A substrate-binding site is contributed by Gly-73–Ala-75.

This sequence belongs to the PanD family. In terms of assembly, heterooctamer of four alpha and four beta subunits. Pyruvate serves as cofactor. Post-translationally, is synthesized initially as an inactive proenzyme, which is activated by self-cleavage at a specific serine bond to produce a beta-subunit with a hydroxyl group at its C-terminus and an alpha-subunit with a pyruvoyl group at its N-terminus.

It localises to the cytoplasm. The enzyme catalyses L-aspartate + H(+) = beta-alanine + CO2. Its pathway is cofactor biosynthesis; (R)-pantothenate biosynthesis; beta-alanine from L-aspartate: step 1/1. Its function is as follows. Catalyzes the pyruvoyl-dependent decarboxylation of aspartate to produce beta-alanine. The chain is Aspartate 1-decarboxylase from Acidothermus cellulolyticus (strain ATCC 43068 / DSM 8971 / 11B).